The sequence spans 89 residues: Small ribosomal subunit protein uS15 (89 aa).

It belongs to the universal ribosomal protein uS15 family. In terms of assembly, part of the 30S ribosomal subunit. Forms a bridge to the 50S subunit in the 70S ribosome, contacting the 23S rRNA.

Functionally, one of the primary rRNA binding proteins, it binds directly to 16S rRNA where it helps nucleate assembly of the platform of the 30S subunit by binding and bridging several RNA helices of the 16S rRNA. In terms of biological role, forms an intersubunit bridge (bridge B4) with the 23S rRNA of the 50S subunit in the ribosome. The chain is Small ribosomal subunit protein uS15 from Rhizobium rhizogenes (strain K84 / ATCC BAA-868) (Agrobacterium radiobacter).